Consider the following 21-residue polypeptide: S-layer protein 2 (21 aa).

It localises to the secreted. It is found in the cell wall. The protein resides in the S-layer. The S-layer is a paracrystalline mono-layered assembly of proteins which coat the surface of bacteria. In Bacillus thuringiensis subsp. konkukian, this protein is S-layer protein 2.